The following is a 172-amino-acid chain: UPF0398 protein gbs0290 (172 aa).

This sequence belongs to the UPF0398 family.

This chain is UPF0398 protein gbs0290, found in Streptococcus agalactiae serotype III (strain NEM316).